A 411-amino-acid polypeptide reads, in one-letter code: Lissencephaly-1 homolog (411 aa).

The region spanning 9 to 41 (QREELNQAIADYLGTNGYADSLEAFRKEADLST) is the LisH domain. Positions 56-83 (TSVIRLQKKVMELEAKLTEAEKEVIEGA) form a coiled coil. WD repeat units lie at residues 106-147 (GHRA…RTLK), 148-187 (GHTD…ECVK), 191-230 (GHDH…CVKT), 233-272 (GHRE…CKVE), 275-334 (DHEH…CLLT), 337-376 (GHDN…CMKT), and 379-411 (AHQH…WECR).

It belongs to the WD repeat LIS1/nudF family.

It localises to the cytoplasm. The protein localises to the cytoskeleton. Its subcellular location is the microtubule organizing center. It is found in the centrosome. Positively regulates the activity of the minus-end directed microtubule motor protein dynein. May enhance dynein-mediated microtubule sliding by targeting dynein to the microtubule plus end. Required for several dynein- and microtubule-dependent processes. This chain is Lissencephaly-1 homolog, found in Drosophila grimshawi (Hawaiian fruit fly).